Reading from the N-terminus, the 484-residue chain is Cobyric acid synthase (484 aa).

The GATase cobBQ-type domain maps to 249-438; that stretch reads QLRVAVPVFT…LHGIFDRPET (190 aa). The Nucleophile role is filled by Cys-330. His-430 is an active-site residue.

It belongs to the CobB/CobQ family. CobQ subfamily.

It functions in the pathway cofactor biosynthesis; adenosylcobalamin biosynthesis. Catalyzes amidations at positions B, D, E, and G on adenosylcobyrinic A,C-diamide. NH(2) groups are provided by glutamine, and one molecule of ATP is hydrogenolyzed for each amidation. The sequence is that of Cobyric acid synthase from Vibrio cholerae serotype O1 (strain ATCC 39315 / El Tor Inaba N16961).